The chain runs to 397 residues: Decapping and exoribonuclease protein (397 aa).

Substrate is bound by residues Arg58, Glu101, and 131 to 133; that span reads WRG. Glu192 serves as a coordination point for Mg(2+). Positions 217 and 234 each coordinate substrate. Residues Glu234, Asp236, Glu253, and Leu254 each coordinate Mg(2+). Residues Lys255 and Gln280 each contribute to the substrate site. Thr392 is modified (phosphothreonine). Ser394 is subject to Phosphoserine.

It belongs to the DXO/Dom3Z family. Requires Mg(2+) as cofactor.

It is found in the nucleus. It catalyses the reaction a 5'-end triphospho-ribonucleoside in mRNA + H2O = a 5'-end phospho-ribonucleoside in mRNA + diphosphate + H(+). The enzyme catalyses a 5'-end NAD(+)-phospho-ribonucleoside in mRNA + H2O = a 5'-end phospho-ribonucleoside in mRNA + NAD(+) + H(+). The catalysed reaction is a 5'-end NAD(+)-phospho-ribonucleoside in snoRNA + H2O = a 5'-end phospho-ribonucleoside in snoRNA + NAD(+) + H(+). It carries out the reaction a 5'-end (N(7)-methyl 5'-triphosphoguanosine)-ribonucleoside-ribonucleotide in mRNA + H2O = a (N(7)-methyl 5'-triphosphoguanosine)-nucleoside + a 5'-end phospho-ribonucleoside in mRNA + H(+). It catalyses the reaction a 5'-end FAD-phospho-ribonucleoside in mRNA + H2O = a 5'-end phospho-ribonucleoside in mRNA + FAD + H(+). The enzyme catalyses a 5'-end CoA-ribonucleoside in mRNA + H2O = 3'-dephospho-CoA + a 5'-end phospho-ribonucleoside in mRNA + H(+). Decapping enzyme for NAD-capped RNAs: specifically hydrolyzes the nicotinamide adenine dinucleotide (NAD) cap from a subset of RNAs by removing the entire NAD moiety from the 5'-end of an NAD-capped RNA. The NAD-cap is present at the 5'-end of some RNAs and snoRNAs. In contrast to the canonical 5'-end N7 methylguanosine (m7G) cap, the NAD cap promotes mRNA decay. Preferentially acts on NAD-capped transcripts in response to environmental stress. Also acts as a non-canonical decapping enzyme that removes the entire cap structure of m7G capped or incompletely capped RNAs and mediates their subsequent degradation. Specifically degrades pre-mRNAs with a defective 5'-end m7G cap and is part of a pre-mRNA capping quality control. Has decapping activity toward incomplete 5'-end m7G cap mRNAs such as unmethylated 5'-end-capped RNA (cap0), while it has no activity toward 2'-O-ribose methylated m7G cap (cap1). In contrast to canonical decapping enzymes DCP2 and NUDT16, which cleave the cap within the triphosphate linkage, the decapping activity releases the entire cap structure GpppN and a 5'-end monophosphate RNA. Also has 5'-3' exoribonuclease activities: The 5'-end monophosphate RNA is then degraded by the 5'-3' exoribonuclease activity, enabling this enzyme to decap and degrade incompletely capped mRNAs. Also possesses RNA 5'-pyrophosphohydrolase activity by hydrolyzing the 5'-end triphosphate to release pyrophosphates. Exhibits decapping activity towards FAD-capped RNAs. Exhibits decapping activity towards dpCoA-capped RNAs in vitro. The polypeptide is Decapping and exoribonuclease protein (Rattus norvegicus (Rat)).